The chain runs to 315 residues: tRNA dimethylallyltransferase (315 aa).

9 to 16 contributes to the ATP binding site; the sequence is GPTASGKT. 11 to 16 contacts substrate; sequence TASGKT. Interaction with substrate tRNA regions lie at residues 34-37 and 158-162; these read DSLL and QRIQR.

This sequence belongs to the IPP transferase family. As to quaternary structure, monomer. It depends on Mg(2+) as a cofactor.

The catalysed reaction is adenosine(37) in tRNA + dimethylallyl diphosphate = N(6)-dimethylallyladenosine(37) in tRNA + diphosphate. Catalyzes the transfer of a dimethylallyl group onto the adenine at position 37 in tRNAs that read codons beginning with uridine, leading to the formation of N6-(dimethylallyl)adenosine (i(6)A). This is tRNA dimethylallyltransferase from Acidithiobacillus ferrooxidans (strain ATCC 53993 / BNL-5-31) (Leptospirillum ferrooxidans (ATCC 53993)).